We begin with the raw amino-acid sequence, 1801 residues long: Sperm flagellar protein 2 (1801 aa).

One can recognise a Calponin-homology (CH) domain in the interval Met1 to Gln105. Coiled-coil stretches lie at residues Glu176–Gln260 and Ala321–Ala395. The segment at Gln632–Glu659 is disordered. Coiled-coil stretches lie at residues Asn722 to Met748 and Ala869 to Ser895. Basic and acidic residues-rich tracts occupy residues Leu883 to Ser892 and Glu909 to Gln918. Residues Leu883–Asp949 are disordered. Residues Glu1051–Ile1077 adopt a coiled-coil conformation. Composition is skewed to basic and acidic residues over residues Arg1233 to Ser1250 and Lys1261 to Lys1295. 3 disordered regions span residues Arg1233–Val1304, Lys1651–Thr1695, and Ser1781–Lys1801. Positions Gln1252 to Pro1286 form a coiled coil. The tract at residues Glu1305–Val1657 is interaction with IFT20. Positions Glu1665 to Thr1695 form a coiled coil. Positions Asn1669 to Glu1687 are enriched in basic and acidic residues.

As to quaternary structure, interacts (via C-terminus) with IFT20. Interacts with DYNC1I2. In terms of tissue distribution, predominantly expressed in ciliated tissues such as lung, trachea, testis, brain, and at lower levels in kidney and spleen.

Its subcellular location is the cell projection. The protein resides in the cilium. The protein localises to the flagellum. It localises to the cytoplasm. It is found in the golgi apparatus. In terms of biological role, required for correct axoneme development in spermatozoa. Important for normal development of the manchette and sperm head morphology. Essential for male fertility. Plays a role in localization of the intraflagellar transport protein IFT20 to the manchette, suggesting function as an adapter for dynein-mediated protein transport during spermatogenesis. Also plays a role in bone growth where it seems to be required for normal osteoblast differentiation. This chain is Sperm flagellar protein 2 (Spef2), found in Rattus norvegicus (Rat).